Reading from the N-terminus, the 254-residue chain is Citrate synthase-lysine N-methyltransferase CSKMT, mitochondrial (254 aa).

The transit peptide at 1–45 (MLLNRFLVPLRSLQKLTQARRWHQTSLINDLVVNMDKKAMWDRFY) directs the protein to the mitochondrion.

Belongs to the methyltransferase superfamily.

The protein localises to the mitochondrion. It catalyses the reaction L-lysyl-[citrate synthase] + S-adenosyl-L-methionine = N(6)-methyl-L-lysyl-[citrate synthase] + S-adenosyl-L-homocysteine + H(+). The catalysed reaction is N(6)-methyl-L-lysyl-[citrate synthase] + S-adenosyl-L-methionine = N(6),N(6)-dimethyl-L-lysyl-[citrate synthase] + S-adenosyl-L-homocysteine + H(+). It carries out the reaction N(6),N(6)-dimethyl-L-lysyl-[citrate synthase] + S-adenosyl-L-methionine = N(6),N(6),N(6)-trimethyl-L-lysyl-[citrate synthase] + S-adenosyl-L-homocysteine + H(+). Its activity is regulated as follows. Citrate synthase-lysine methyltransferase activity is inhibited by S-adenosylhomocysteine (AdoHcy) and oxaloacetate (OAA). Protein-lysine methyltransferase that selectively trimethylates citrate synthase (CS) in mitochondria. Seems to conduct trimethylation in a highly distributive manner rather than in a processive manner, and thus introduces a single methyl group per binding event. The sequence is that of Citrate synthase-lysine N-methyltransferase CSKMT, mitochondrial from Danio rerio (Zebrafish).